A 1494-amino-acid chain; its full sequence is ABC multidrug transporter atrG (1494 aa).

Polar residues predominate over residues 1 to 11 (MSLLGTINPNL). Disordered regions lie at residues 1-48 (MSLL…RTSD) and 84-105 (FSVSQNAENPFLETKEDSTLNP). Asn41 carries N-linked (GlcNAc...) asparagine glycosylation. N-linked (GlcNAc...) asparagine glycosylation is found at Asn141 and Asn340. Residues 162 to 416 (LQVGALFRAV…FTTMGFECPE (255 aa)) form the ABC transporter 1 domain. 2 consecutive transmembrane segments (helical) span residues 527–547 (LTMSQLIGNFIMALIIGSVFY) and 561–581 (ALLFFAVLLNAFSSALEILTL). Asn622 carries an N-linked (GlcNAc...) asparagine glycan. Helical transmembrane passes span 636 to 656 (GPFFVFLLFTFVTTMTMSMLF), 669 to 689 (ALVPAAILILGLVIYTGFTIP), and 778 to 798 (GIMFAFMVFFLATYLTATEYI). N-linked (GlcNAc...) asparagine glycosylation occurs at Asn835. One can recognise an ABC transporter 2 domain in the interval 852–1095 (FHWQDVCYDI…LASYFERNGA (244 aa)). 888–895 (GVSGAGKT) is an ATP binding site. The next 5 helical transmembrane spans lie at 1191 to 1211 (YIYSKAVLCILTSLYIGFSFF), 1227 to 1247 (IFMLMTIFGNLVQQIMPNFVT), 1276 to 1296 (LPWNALMSVIIFVCWYYPIGL), 1312 to 1332 (LMWLLILSFLLFTSTFAHMMI), and 1351 to 1371 (LCLIFCGVLATPETLPGFWIF). Asn1410 and Asn1432 each carry an N-linked (GlcNAc...) asparagine glycan. The helical transmembrane segment at 1463 to 1483 (FGIMWAFIVFNIAAAVFIYWL) threads the bilayer.

It belongs to the ABC transporter superfamily. ABCG family. PDR (TC 3.A.1.205) subfamily.

It localises to the cell membrane. The enzyme catalyses (R)-miconazole(in) + ATP + H2O = (R)-miconazole(out) + ADP + phosphate + H(+). Its function is as follows. Pleiotropic ABC efflux transporter involved in the basal level of azole susceptibility. Confers resistance to miconazole and clotrimazole. In Aspergillus oryzae (strain ATCC 42149 / RIB 40) (Yellow koji mold), this protein is ABC multidrug transporter atrG.